A 103-amino-acid chain; its full sequence is Large ribosomal subunit protein eL30 (103 aa).

It belongs to the eukaryotic ribosomal protein eL30 family.

The polypeptide is Large ribosomal subunit protein eL30 (Methanothrix thermoacetophila (strain DSM 6194 / JCM 14653 / NBRC 101360 / PT) (Methanosaeta thermophila)).